The sequence spans 102 residues: Small ribosomal subunit protein eS24 (102 aa).

It belongs to the eukaryotic ribosomal protein eS24 family.

The polypeptide is Small ribosomal subunit protein eS24 (Methanococcus maripaludis (strain C5 / ATCC BAA-1333)).